The primary structure comprises 122 residues: Large ribosomal subunit protein uL14c (122 aa).

It belongs to the universal ribosomal protein uL14 family. In terms of assembly, part of the 50S ribosomal subunit.

The protein localises to the plastid. It localises to the chloroplast. Functionally, binds to 23S rRNA. The chain is Large ribosomal subunit protein uL14c from Calycanthus floridus var. glaucus (Eastern sweetshrub).